A 119-amino-acid polypeptide reads, in one-letter code: Holo-[acyl-carrier-protein] synthase (119 aa).

Mg(2+)-binding residues include Asp-8 and Glu-58.

Belongs to the P-Pant transferase superfamily. AcpS family. Requires Mg(2+) as cofactor.

The protein resides in the cytoplasm. It carries out the reaction apo-[ACP] + CoA = holo-[ACP] + adenosine 3',5'-bisphosphate + H(+). Its function is as follows. Transfers the 4'-phosphopantetheine moiety from coenzyme A to a Ser of acyl-carrier-protein. In Bacillus cereus (strain ZK / E33L), this protein is Holo-[acyl-carrier-protein] synthase.